The following is a 424-amino-acid chain: L-glutamine:2-deoxy-scyllo-inosose aminotransferase (424 aa).

Lys202 is modified (N6-(pyridoxal phosphate)lysine).

The protein belongs to the DegT/DnrJ/EryC1 family. L-glutamine:2-deoxy-scyllo-inosose/scyllo-inosose aminotransferase subfamily. Pyridoxal 5'-phosphate is required as a cofactor.

The enzyme catalyses 2-deoxy-L-scyllo-inosose + L-glutamine = 2-deoxy-scyllo-inosamine + 2-oxoglutaramate. The catalysed reaction is 3-amino-2,3-dideoxy-scyllo-inosose + L-glutamine = 2-deoxystreptamine + 2-oxoglutaramate. The protein operates within metabolic intermediate biosynthesis; 2-deoxystreptamine biosynthesis; 2-deoxystreptamine from D-glucose 6-phosphate: step 2/4. It participates in metabolic intermediate biosynthesis; 2-deoxystreptamine biosynthesis; 2-deoxystreptamine from D-glucose 6-phosphate: step 4/4. It functions in the pathway antibiotic biosynthesis; paromomycin biosynthesis. Functionally, catalyzes the PLP-dependent transamination of 2-deoxy-scyllo-inosose (2-DOI) to form 2-deoxy-scyllo-inosamine (2-DOIA) using L-glutamine as the amino donor. Also catalyzes the transamination of 3-amino-2,3-dideoxy-scyllo-inosose (keto-2-DOIA) into 2-deoxystreptamine (2-DOS). The chain is L-glutamine:2-deoxy-scyllo-inosose aminotransferase (parS) from Streptomyces paromomycinus (Streptomyces rimosus subsp. paromomycinus).